Consider the following 176-residue polypeptide: MMDWYAIQTYSGSEQSVKKAIENLANDHDIRDRIQEIIVPTEDIIEVSKKSKTKVMERSLYPGYVFIKVDLDTVLWHKIQSLPRVSRFIGENKKPTPLSEADIGHILEKMNNRAAPKPKIFFEQGEVVRVVEGPFANFTATVEEYDVEHRKLKLNVSIFGRTTPIEILYSQVEKII.

The KOW domain maps to 125–149 (GEVVRVVEGPFANFTATVEEYDVEH).

The protein belongs to the NusG family.

Functionally, participates in transcription elongation, termination and antitermination. The sequence is that of Transcription termination/antitermination protein NusG from Helicobacter pylori (strain J99 / ATCC 700824) (Campylobacter pylori J99).